Consider the following 117-residue polypeptide: Large ribosomal subunit protein uL18 (117 aa).

It belongs to the universal ribosomal protein uL18 family. Part of the 50S ribosomal subunit; part of the 5S rRNA/L5/L18/L25 subcomplex. Contacts the 5S and 23S rRNAs.

In terms of biological role, this is one of the proteins that bind and probably mediate the attachment of the 5S RNA into the large ribosomal subunit, where it forms part of the central protuberance. This is Large ribosomal subunit protein uL18 from Onion yellows phytoplasma (strain OY-M).